Here is a 742-residue protein sequence, read N- to C-terminus: Synaptic vesicle glycoprotein 2A (742 aa).

An interaction with SYT1 region spans residues 1–57 (MEEGFRDRAAFIRGAKDIAKEVKKHAAKKVVKGLDRVQDEYSRRSYSRFEEEDDDDD). The Cytoplasmic portion of the chain corresponds to 1 to 169 (MEEGFRDRAA…SHGRFQWTLY (169 aa)). The segment covering 40–49 (EYSRRSYSRF) has biased composition (basic and acidic residues). Residues 40–144 (EYSRRSYSRF…GRGEAQRRKE (105 aa)) are disordered. 2 positions are modified to phosphoserine: Ser80 and Ser81. Position 84 is a phosphothreonine (Thr84). The span at 122 to 137 (VRGGLSDGEGPPGGRG) shows a compositional bias: gly residues. Ser127 is subject to Phosphoserine. The chain crosses the membrane as a helical span at residues 170–190 (FVLGLALMADGVEVFVVGFVL). The Extracellular portion of the chain corresponds to 191-205 (PSAEKDMCLSDSNKG). The helical transmembrane segment at 206–226 (MLGLIVYLGMMVGAFLWGGLA) threads the bilayer. The Cytoplasmic portion of the chain corresponds to 227-233 (DRLGRRQ). A helical membrane pass occupies residues 234-254 (CLLISLSVNSVFAFFSSFVQG). Residues 255–262 (YGTFLFCR) lie on the Extracellular side of the membrane. Residues 263 to 283 (LLSGVGIGGSIPIVFSYFSEF) form a helical membrane-spanning segment. Over 284-294 (LAQEKRGEHLS) the chain is Cytoplasmic. The helical transmembrane segment at 295-315 (WLCMFWMIGGVYAAAMAWAII) threads the bilayer. Over 316-334 (PHYGWSFQMGSAYQFHSWR) the chain is Extracellular. The chain crosses the membrane as a helical span at residues 335–355 (VFVLVCAFPSVFAIGALTTQP). Over 356-447 (ESPRFFLENG…CFGPEYRRIT (92 aa)) the chain is Cytoplasmic. Position 393 is a phosphoserine (Ser393). The chain crosses the membrane as a helical span at residues 448-468 (LMMMGVWFTMSFSYYGLTVWF). At 469 to 598 (PDMIRHLQAV…GTGEGAYMVY (130 aa)) the chain is on the extracellular side. Phosphotyrosine is present on Tyr480. 3 N-linked (GlcNAc...) asparagine glycosylation sites follow: Asn498, Asn548, and Asn573. A helical membrane pass occupies residues 599 to 619 (FVSFLGTLAVLPGNIVSALLM). The Cytoplasmic segment spans residues 620-626 (DKIGRLR). The chain crosses the membrane as a helical span at residues 627–647 (MLAGSSVMSCVSCFFLSFGNS). Residues 648 to 651 (ESAM) lie on the Extracellular side of the membrane. A helical transmembrane segment spans residues 652-672 (IALLCLFGGVSIASWNALDVL). Residues 673 to 685 (TVELYPSDKRTTA) lie on the Cytoplasmic side of the membrane. A helical transmembrane segment spans residues 686–708 (FGFLNALCKLAAVLGISIFTSFV). Topologically, residues 709–712 (GITK) are extracellular. The chain crosses the membrane as a helical span at residues 713–731 (AAPILFASAALALGSSLAL). Residues 732–742 (KLPETRGQVLQ) lie on the Cytoplasmic side of the membrane.

It belongs to the major facilitator superfamily. Interacts with SYT1/synaptotagmin-1 in a calcium-dependent manner. Binds the adapter protein complex AP-2. Post-translationally, phosphorylation by CK1 of the N-terminal cytoplasmic domain regulates interaction with SYT1. N-glycosylated.

The protein localises to the presynapse. The protein resides in the cytoplasmic vesicle. Its subcellular location is the secretory vesicle. It is found in the synaptic vesicle membrane. Functionally, plays a role in the control of regulated secretion in neural and endocrine cells, enhancing selectively low-frequency neurotransmission. Positively regulates vesicle fusion by maintaining the readily releasable pool of secretory vesicles. The chain is Synaptic vesicle glycoprotein 2A (SV2A) from Pongo abelii (Sumatran orangutan).